Here is a 734-residue protein sequence, read N- to C-terminus: Polyribonucleotide nucleotidyltransferase (734 aa).

2 residues coordinate Mg(2+): D503 and D509. The region spanning 570–629 is the KH domain; that stretch reads PKLSTIQVPVDAIGMIIGKGGETIRSITEETGAQINVDDDGTVTISSPNGESAAAAIETI. One can recognise an S1 motif domain in the interval 639-713; the sequence is GTIYMGKVKD…GKIRYALSIK (75 aa).

The protein belongs to the polyribonucleotide nucleotidyltransferase family. It depends on Mg(2+) as a cofactor.

Its subcellular location is the cytoplasm. It carries out the reaction RNA(n+1) + phosphate = RNA(n) + a ribonucleoside 5'-diphosphate. In terms of biological role, involved in mRNA degradation. Catalyzes the phosphorolysis of single-stranded polyribonucleotides processively in the 3'- to 5'-direction. This chain is Polyribonucleotide nucleotidyltransferase, found in Chlorobium phaeobacteroides (strain BS1).